Here is a 306-residue protein sequence, read N- to C-terminus: UDP-3-O-acyl-N-acetylglucosamine deacetylase (306 aa).

His-79, His-238, and Asp-242 together coordinate Zn(2+). His-265 (proton donor) is an active-site residue.

It belongs to the LpxC family. It depends on Zn(2+) as a cofactor.

The catalysed reaction is a UDP-3-O-[(3R)-3-hydroxyacyl]-N-acetyl-alpha-D-glucosamine + H2O = a UDP-3-O-[(3R)-3-hydroxyacyl]-alpha-D-glucosamine + acetate. It functions in the pathway glycolipid biosynthesis; lipid IV(A) biosynthesis; lipid IV(A) from (3R)-3-hydroxytetradecanoyl-[acyl-carrier-protein] and UDP-N-acetyl-alpha-D-glucosamine: step 2/6. Its function is as follows. Catalyzes the hydrolysis of UDP-3-O-myristoyl-N-acetylglucosamine to form UDP-3-O-myristoylglucosamine and acetate, the committed step in lipid A biosynthesis. The chain is UDP-3-O-acyl-N-acetylglucosamine deacetylase from Shewanella sp. (strain W3-18-1).